We begin with the raw amino-acid sequence, 2912 residues long: Fibrillin-2 (2912 aa).

The signal sequence occupies residues 1–28 (MGRRRRLCLQLYFLWLGCVVLWAQGTAG). The interval 27–52 (AGQPQPPPPKPPRPQPPPQQVRSATA) is disordered. A propeptide spanning residues 29–77 (QPQPPPPKPPRPQPPPQQVRSATAGSEGGFLAPEYREEGAAVASRVRRR) is cleaved from the precursor. Pro residues predominate over residues 30–45 (PQPPPPKPPRPQPPPQ). 3 consecutive EGF-like domains span residues 111 to 142 (IVPICRNSCGDGFCSRPNMCTCSSGQISSTCG), 145 to 176 (SIQQCSVRCMNGGTCADDHCQCQKGYIGTYCG), and 176 to 208 (GQPVCENGCQNGGRCIGPNRCACVYGFTGPQCE). 9 disulfides stabilise this stretch: cysteine 115/cysteine 124, cysteine 119/cysteine 130, cysteine 132/cysteine 141, cysteine 149/cysteine 159, cysteine 153/cysteine 164, cysteine 166/cysteine 175, cysteine 180/cysteine 190, cysteine 184/cysteine 196, and cysteine 198/cysteine 207. The interaction with MFAP4 stretch occupies residues 149–359 (CSVRCMNGGT…VTSTDGSRCI (211 aa)). The 53-residue stretch at 214–266 (GPCFTQVNNQMCQGQLTGIVCTKTLCCATIGRAWGHPCEMCPAQPQPCRRGFI) folds into the TB 1 domain. Residues 276-317 (DVDECQAIPGICQGGNCINTVGSFECRCPAGHKQSETTQKCE) form the EGF-like 4; calcium-binding domain. 6 disulfides stabilise this stretch: cysteine 280–cysteine 292, cysteine 287–cysteine 301, cysteine 303–cysteine 316, cysteine 322–cysteine 334, cysteine 329–cysteine 343, and cysteine 345–cysteine 358. Serine 298 carries an O-linked (Glc) serine glycan. Residues 318–359 (DIDECSIIPGICETGECSNTVGSYFCVCPRGYVTSTDGSRCI) enclose the EGF-like 5; calcium-binding domain. An O-linked (Glc) serine glycan is attached at serine 340. In terms of domain architecture, TB 2 spans 364 to 417 (GMCFSGLVNGRCAQELPGRMTKMQCCCEPGRCWGIGTIPEACPVRGSEEYRRLC). Asparagine 492 is a glycosylation site (N-linked (GlcNAc...) asparagine). Residues 494–534 (TIDICKHHANLCLNGRCIPTVSSYRCECNMGYKQDANGDCI) enclose the EGF-like 6 domain. Cystine bridges form between cysteine 498–cysteine 510, cysteine 505–cysteine 519, cysteine 521–cysteine 533, cysteine 539–cysteine 549, cysteine 544–cysteine 558, cysteine 560–cysteine 573, cysteine 579–cysteine 591, cysteine 586–cysteine 600, cysteine 602–cysteine 615, cysteine 621–cysteine 632, cysteine 627–cysteine 641, cysteine 643–cysteine 656, cysteine 662–cysteine 673, cysteine 668–cysteine 682, and cysteine 684–cysteine 697. An O-linked (Glc) serine glycan is attached at serine 516. Positions 535 to 574 (DVDECTSNPCTNGDCVNTPGSYYCKCHAGFQRTPTKQACI) constitute an EGF-like 7; calcium-binding domain. An O-linked (Glc) serine glycan is attached at serine 555. The EGF-like 8; calcium-binding domain occupies 575–616 (DIDECIQNGVLCKNGRCVNTDGSFQCICNAGFELTTDGKNCV). Residue serine 597 is glycosylated (O-linked (Glc) serine). One can recognise an EGF-like 9; calcium-binding domain in the interval 617–657 (DHDECTTTNMCLNGMCINEDGSFKCICKPGFVLAPNGRYCT). The O-linked (Glc) serine glycan is linked to serine 638. Residues 658–698 (DVDECQTPGICMNGHCINSEGSFRCDCPPGLAVGMDGRVCV) form the EGF-like 10; calcium-binding domain. An O-linked (Glc) serine glycan is attached at serine 679. Residues 704–756 (STCYGGIKKGVCVRPFPGAVTKSECCCANPDYGFGEPCQPCPAKNSAEFHGLC) enclose the TB 3 domain. Residues 768–809 (DINECALDPDICANGICENLRGSYRCNCNSGYEPDASGRNCI) form the EGF-like 11; calcium-binding domain. 9 cysteine pairs are disulfide-bonded: cysteine 772/cysteine 784, cysteine 779/cysteine 793, cysteine 795/cysteine 808, cysteine 814/cysteine 826, cysteine 821/cysteine 835, cysteine 837/cysteine 850, cysteine 856/cysteine 866, cysteine 861/cysteine 875, and cysteine 877/cysteine 890. The region spanning 810–851 (DIDECLVNRLLCDNGLCRNTPGSYSCTCPPGYVFRTETETCE) is the EGF-like 12; calcium-binding domain. A glycan (O-linked (Glc) serine) is linked at serine 832. The 40-residue stretch at 852-891 (DINECESNPCVNGACRNNLGSFNCECSPGSKLSSTGLICI) folds into the EGF-like 13; calcium-binding domain. Residue serine 872 is glycosylated (O-linked (Glc) serine). A TB 4 domain is found at 896–947 (GTCWLNIQDSRCEVNINGATLKSECCATLGAAWGSPCERCELDTACPRGLAR). An EGF-like 14; calcium-binding domain is found at 955-996 (DVNECEVFPGVCPNGRCVNSKGSFHCECPEGLTLDGTGRVCL). 3 cysteine pairs are disulfide-bonded: cysteine 959–cysteine 971, cysteine 966–cysteine 980, and cysteine 982–cysteine 995. Residue serine 977 is glycosylated (O-linked (Glc) serine). Residues 1001 to 1052 (EQCYLKWDEDECIHPVPGKFRMDACCCAVGAAWGTECEECPKPGTKEYETLC) enclose the TB 5 domain. The EGF-like 15; calcium-binding domain occupies 1073–1114 (DINECKAFPGMCTYGKCRNTIGSFKCRCNSGFALDMEERNCT). Cystine bridges form between cysteine 1077–cysteine 1089, cysteine 1084–cysteine 1098, cysteine 1100–cysteine 1113, cysteine 1119–cysteine 1131, cysteine 1126–cysteine 1140, cysteine 1142–cysteine 1156, cysteine 1162–cysteine 1174, cysteine 1169–cysteine 1183, cysteine 1185–cysteine 1198, cysteine 1204–cysteine 1216, cysteine 1211–cysteine 1225, cysteine 1227–cysteine 1240, cysteine 1246–cysteine 1257, cysteine 1253–cysteine 1266, cysteine 1268–cysteine 1281, cysteine 1287–cysteine 1299, cysteine 1294–cysteine 1308, cysteine 1310–cysteine 1323, cysteine 1329–cysteine 1341, cysteine 1336–cysteine 1350, cysteine 1352–cysteine 1365, cysteine 1371–cysteine 1384, cysteine 1378–cysteine 1393, cysteine 1395–cysteine 1406, cysteine 1412–cysteine 1425, cysteine 1419–cysteine 1434, cysteine 1436–cysteine 1447, cysteine 1453–cysteine 1465, cysteine 1460–cysteine 1474, cysteine 1476–cysteine 1489, cysteine 1495–cysteine 1506, cysteine 1501–cysteine 1515, cysteine 1517–cysteine 1530, cysteine 1536–cysteine 1547, cysteine 1542–cysteine 1556, and cysteine 1558–cysteine 1571. O-linked (Glc) serine glycosylation occurs at serine 1095. N-linked (GlcNAc...) asparagine glycosylation is present at asparagine 1112. The 43-residue stretch at 1115-1157 (DIDECRISPDLCGSGICVNTPGSFECECFEGYESGFMMMKNCM) folds into the EGF-like 16; calcium-binding domain. The region spanning 1158–1199 (DIDECERNPLLCRGGTCVNTEGSFQCDCPLGHELSPSREDCV) is the EGF-like 17; calcium-binding domain. Serine 1180 carries O-linked (Glc) serine glycosylation. One can recognise an EGF-like 18; calcium-binding domain in the interval 1200-1241 (DINECSLSDNLCRNGKCVNMIGTYQCSCNPGYQATPDRQGCT). An O-linked (Glc) threonine glycan is attached at threonine 1222. One can recognise an EGF-like 19; calcium-binding domain in the interval 1242 to 1282 (DIDECMIMNGGCDTQCTNSEGSYECSCSEGYALMPDGRSCA). An O-linked (Glc) serine glycan is attached at serine 1263. The EGF-like 20; calcium-binding domain occupies 1283–1324 (DIDECENNPDICDGGQCTNIPGEYRCLCYDGFMASMDMKTCI). Positions 1325-1366 (DVNECDLNSNICMFGECENTKGSFICHCQLGYSVKKGTTGCT) constitute an EGF-like 21; calcium-binding domain. An O-linked (Glc) serine glycan is attached at serine 1347. Residues 1367 to 1407 (DVDECEIGAHNCDMHASCLNIPGSFKCSCREGWIGNGIKCI) enclose the EGF-like 22; calcium-binding domain. An O-linked (Glc) serine glycan is attached at serine 1390. In terms of domain architecture, EGF-like 23; calcium-binding spans 1408–1448 (DLDECSNGTHQCSINAQCVNTPGSYRCACSEGFTGDGFTCS). Asparagine 1414 carries an N-linked (GlcNAc...) asparagine glycan. The EGF-like 24; calcium-binding domain occupies 1449 to 1490 (DVDECAENINLCENGQCLNVPGAYRCECEMGFTPASDSRSCQ). Positions 1491–1531 (DIDECSFQNICVFGTCNNLPGMFHCICDDGYELDRTGGNCT) constitute an EGF-like 25; calcium-binding domain. N-linked (GlcNAc...) asparagine glycosylation occurs at asparagine 1529. The region spanning 1532–1572 (DIDECADPINCVNGLCVNTPGRYECNCPPDFQLNPTGVGCV) is the EGF-like 26; calcium-binding domain. Positions 1577–1633 (GNCYLKFGPRGDGSLSCNTEIGVGVSRSSCCCSLGKAWGNPCETCPPVNSTEYYTLC) constitute a TB 6 domain. The N-linked (GlcNAc...) asparagine glycan is linked to asparagine 1625. The EGF-like 27; calcium-binding domain occupies 1650-1691 (DIDECQELPGLCQGGNCINTFGSFQCECPQGYYLSEDTRICE). 6 disulfide bridges follow: cysteine 1654–cysteine 1666, cysteine 1661–cysteine 1675, cysteine 1677–cysteine 1690, cysteine 1696–cysteine 1708, cysteine 1703–cysteine 1717, and cysteine 1719–cysteine 1732. Serine 1672 is a glycosylation site (O-linked (Glc) serine). The EGF-like 28; calcium-binding domain occupies 1692–1733 (DIDECFAHPGVCGPGTCYNTLGNYTCICPPEYMQVNGGHNCM). Asparagine 1714 carries an N-linked (GlcNAc...) asparagine glycan. The tract at residues 1735 to 2171 (MRKSFCYRSY…VPSLHDTRED (437 aa)) is interaction with MFAP4. Residues 1738–1791 (SFCYRSYNGTTCENELPFNVTKRMCCCTYNVGKAWNKPCEPCPTPGTADFKTIC) enclose the TB 7 domain. Residues asparagine 1745 and asparagine 1756 are each glycosylated (N-linked (GlcNAc...) asparagine). In terms of domain architecture, EGF-like 29; calcium-binding spans 1808–1849 (DIDECKEIPGICANGVCINQIGSFRCECPTGFSYNDLLLVCE). 21 disulfides stabilise this stretch: cysteine 1812/cysteine 1824, cysteine 1819/cysteine 1833, cysteine 1835/cysteine 1848, cysteine 1854/cysteine 1867, cysteine 1861/cysteine 1876, cysteine 1878/cysteine 1890, cysteine 1896/cysteine 1908, cysteine 1903/cysteine 1917, cysteine 1919/cysteine 1932, cysteine 1938/cysteine 1948, cysteine 1943/cysteine 1957, cysteine 1959/cysteine 1971, cysteine 1977/cysteine 1990, cysteine 1985/cysteine 1999, cysteine 2001/cysteine 2014, cysteine 2020/cysteine 2032, cysteine 2027/cysteine 2041, cysteine 2043/cysteine 2054, cysteine 2060/cysteine 2072, cysteine 2067/cysteine 2081, and cysteine 2083/cysteine 2096. The EGF-like 30; calcium-binding domain maps to 1850 to 1891 (DIDECSNGDNLCQRNADCINSPGSYRCECAAGFKLSPNGACV). O-linked (Glc) serine glycosylation is present at serine 1873. Residues 1892-1933 (DRNECLEIPNVCSHGLCVDLQGSYQCICHNGFKASQDQTMCM) form the EGF-like 31; calcium-binding domain. The region spanning 1934-1972 (DVDECERHPCGNGTCKNTVGSYNCLCYPGFELTHNNDCL) is the EGF-like 32; calcium-binding domain. Asparagine 1945 carries an N-linked (GlcNAc...) asparagine glycan. An O-linked (Glc) serine glycan is attached at serine 1954. In terms of domain architecture, EGF-like 33; calcium-binding spans 1973–2015 (DIDECSSFFGQVCRNGRCFNEIGSFKCLCNEGYELTPDGKNCI). O-linked (Glc) serine glycosylation occurs at serine 1996. The EGF-like 34; calcium-binding domain occupies 2016–2055 (DTNECVALPGSCSPGTCQNLEGSFRCICPPGYEVKSENCI). Residues 2056–2097 (DINECDEDPNICLFGSCTNTPGGFQCLCPPGFVLSDNGRRCF) form the EGF-like 35; calcium-binding domain. The 54-residue stretch at 2102–2155 (SFCFTNFENGKCSVPKAFNTTKAKCCCSKMPGEGWGDPCELCPKDDEVAFQDLC) folds into the TB 8 domain. Asparagine 2120 is a glycosylation site (N-linked (GlcNAc...) asparagine). The region spanning 2171–2212 (DVNECLESPGICSNGQCINTDGSFRCECPMGYNLDYTGVRCV) is the EGF-like 36; calcium-binding domain. Cystine bridges form between cysteine 2175–cysteine 2187, cysteine 2182–cysteine 2196, cysteine 2198–cysteine 2211, cysteine 2217–cysteine 2228, cysteine 2223–cysteine 2237, cysteine 2239–cysteine 2251, cysteine 2257–cysteine 2268, cysteine 2264–cysteine 2277, cysteine 2279–cysteine 2292, cysteine 2298–cysteine 2312, cysteine 2305–cysteine 2321, cysteine 2323–cysteine 2336, cysteine 2342–cysteine 2354, cysteine 2349–cysteine 2363, and cysteine 2365–cysteine 2378. An O-linked (Glc) serine glycan is attached at serine 2193. Positions 2213–2252 (DTDECSIGNPCGNGTCTNVIGSFECNCNEGFEPGPMMNCE) constitute an EGF-like 37; calcium-binding domain. Asparagine 2225 carries an N-linked (GlcNAc...) asparagine glycan. An EGF-like 38; calcium-binding domain is found at 2253–2293 (DINECAQNPLLCAFRCMNTFGSYECTCPIGYALREDQKMCK). O-linked (Glc) serine glycosylation occurs at serine 2274. An EGF-like 39; calcium-binding domain is found at 2294–2337 (DLDECAEGLHDCESRGMMCKNLIGTFMCICPPGMARRPDGEGCV). In terms of domain architecture, EGF-like 40; calcium-binding spans 2338-2379 (DENECRTKPGICENGRCVNIIGSYRCECNEGFQSSSSGTECL). Serine 2360 is a glycosylation site (O-linked (Glc) serine). A TB 9 domain is found at 2384–2437 (GLCFAEVLQTICQMASSSRNLVTKSECCCDGGRGWGHQCELCPLPGTAQYKKIC). In terms of domain architecture, EGF-like 41; calcium-binding spans 2449-2490 (DIDECKVMPNLCTNGQCINTMGSFRCFCKVGYTTDISGTSCI). Intrachain disulfides connect cysteine 2453-cysteine 2465, cysteine 2460-cysteine 2474, cysteine 2476-cysteine 2489, cysteine 2495-cysteine 2506, cysteine 2502-cysteine 2515, cysteine 2517-cysteine 2530, cysteine 2536-cysteine 2547, cysteine 2543-cysteine 2556, cysteine 2558-cysteine 2569, cysteine 2575-cysteine 2588, cysteine 2582-cysteine 2597, cysteine 2599-cysteine 2612, cysteine 2618-cysteine 2628, cysteine 2624-cysteine 2637, cysteine 2639-cysteine 2652, cysteine 2658-cysteine 2669, cysteine 2664-cysteine 2678, cysteine 2680-cysteine 2693, cysteine 2699-cysteine 2710, cysteine 2706-cysteine 2719, and cysteine 2721-cysteine 2733. Serine 2471 is a glycosylation site (O-linked (Glc) serine). One can recognise an EGF-like 42; calcium-binding domain in the interval 2491 to 2531 (DLDECSQSPKPCNYICKNTEGSYQCSCPRGYVLQEDGKTCK). O-linked (Glc) serine glycosylation is present at serine 2512. One can recognise an EGF-like 43; calcium-binding domain in the interval 2532 to 2570 (DLDECQTKQHNCQFLCVNTLGGFTCKCPPGFTQHHTACI). Positions 2571-2613 (DNNECGSQPSLCGAKGICQNTPGSFSCECQRGFSLDATGLNCE) constitute an EGF-like 44; calcium-binding domain. Serine 2594 carries an O-linked (Glc) serine glycan. In terms of domain architecture, EGF-like 45; calcium-binding spans 2614–2653 (DVDECDGNHRCQHGCQNILGGYRCGCPQGYIQHYQWNQCV). One can recognise an EGF-like 46; calcium-binding domain in the interval 2654 to 2694 (DENECSNPNACGSASCYNTLGSYKCACPSGFSFDQFSSACH). O-linked (Glc) serine glycosylation is present at serine 2675. An EGF-like 47; calcium-binding domain is found at 2695 to 2734 (DVNECSSSKNPCNYGCSNTEGGYLCGCPPGYYRVGQGHCV). The N-linked (GlcNAc...) asparagine glycan is linked to asparagine 2808.

Belongs to the fibrillin family. Interacts with BMP2, BMP4, BMP7, BMP10 and GDF5. Interacts with MFAP2 and MFAP5. Interacts with ADAMTSL5. Interacts with MFAP4. N-glycosylated. Post-translationally, O-glycosylated on serine residues by POGLUT2 and POGLUT3. As to expression, almost exclusively expressed in placenta. Expressed at much lower level in other tissues. Expressed in fetal eye (18 weeks)in the retinal pigment epithelium (RPE), the choroid, Bruch's membrane and in the sclera. Not expressed in the neural retina. Present at high level in cytotrophoblasts as compared with syncytiotrophoblasts at 8-9 weeks of pregnancy (at protein level). Levels in the serum increase during pregnancy (at protein level).

The protein localises to the secreted. The protein resides in the extracellular space. It is found in the extracellular matrix. Fibrillins are structural components of 10-12 nm extracellular calcium-binding microfibrils, which occur either in association with elastin or in elastin-free bundles. Fibrillin-2-containing microfibrils regulate the early process of elastic fiber assembly. Regulates osteoblast maturation by controlling TGF-beta bioavailability and calibrating TGF-beta and BMP levels, respectively. Functionally, hormone secreted by trophoblasts that promotes trophoblast invasiveness. Has glucogenic activity: is able to increase plasma glucose levels. In Homo sapiens (Human), this protein is Fibrillin-2.